Here is a 401-residue protein sequence, read N- to C-terminus: L-rhamnonate dehydratase (401 aa).

Substrate is bound by residues H29 and R55. Mg(2+)-binding residues include D222, E248, and E276. H325 acts as the Proton acceptor in catalysis. E345 contributes to the substrate binding site.

This sequence belongs to the mandelate racemase/muconate lactonizing enzyme family. RhamD subfamily. Homooctamer; tetramer of dimers. Requires Mg(2+) as cofactor.

The catalysed reaction is L-rhamnonate = 2-dehydro-3-deoxy-L-rhamnonate + H2O. Functionally, catalyzes the dehydration of L-rhamnonate to 2-keto-3-deoxy-L-rhamnonate (KDR). The sequence is that of L-rhamnonate dehydratase from Klebsiella pneumoniae (strain 342).